We begin with the raw amino-acid sequence, 991 residues long: MSAEAADREAATSSRPCTPPQTSWFEFLLDDSLLEKHLQKPHSDPPPVQLIVQFLEQASKPTLNEQNQVQPPTDNKRNRTLKLLALKVAAHLKWNLDVLEKSLSVPVLNMLLNELLCASKVPPGTKHVDLDLSTLPPTTVMAVTLYNRWAIRTIVQSGFPVKPVKQGPQQPNVMNQIQQEKELTENILKVLKEQAEDSITVLEGALQLKRDFYVHTMRTLDLLAVEPGMVNGETENSTAGFKISSDEMQCQGCYDLGAVYFLQGPTNPSCYEKARDHFFRTKQLVSKIGAASDHYAIDEKRLAGYCQACGVLAPSNVVSQPATPYSQIHNFMKTNNYQGILKIFLEDHLNNSLPDQFRQSVLRELFQKSQQGNGALAELCFKVCACNTVYDILHGQPVTVQFHQLFMKPSKEKIDFLLEVCSRSLMSDQASEASKRKIATFLKNLCLEIEDLQLVFMISSHELFMKMLTDEESKMVVEHLRKKTSRVSMCTKPITSFYDIPASASVNIGQLEHQLILTVDPWRIRQILIELHGMTSDRQYWKVSSKWEVPTIYSGSILGIKDNLTRDLVYILLAKGLHCSAIKDYPRAKQLLSACLELVTEFSPKLRQVMLNEMLLLDIYTYEAVSAQERPPPELISRVRGYLEMRIPDIPLRQVVAEECVAFLLNWRENECLTLQVPASLVQSNPYVKLGQLLAATCKELPGPDSRRTAKDLWEVVVQICSVSNQHKRNNDGRVCLIKNRDSTMGIMYRNELVSFIKKLREPLVLTTLLSLFVKLHNLREDIVNDITAEHISIWPSCIPNLQAVDFDAVAVTVKELVSYALTINSNSHSWLTIQADIYFATNEYSAALNYYLQAGAVCSDFFTKQVPPEVYTDQVIKRMIKCCSMLNCHTQVAILCQFLREIDYKTAFKALQEQNSHDGMDSYYDYIWDVTILEYLTYLHHKRGETDKRQIAIKAIGQTELNASNPDEVLQLAAQRRKKKFLQSMAKLYF.

A compositionally biased stretch (basic and acidic residues) spans 1–10; that stretch reads MSAEAADREA. Residues 1–22 are disordered; sequence MSAEAADREAATSSRPCTPPQT. Polar residues predominate over residues 11–22; the sequence is ATSSRPCTPPQT. Positions 24–29 match the WFEF motif motif; that stretch reads WFEFLL. TPR repeat units follow at residues 250–288, 319–355, 569–602, and 829–862; these read CQGC…VSKI, SQPA…SLPD, VYIL…VTEF, and HSWL…CSDF.

The protein belongs to the Integrator subunit 8 family. As to quaternary structure, component of the Integrator complex, composed of core subunits INTS1, INTS2, INTS3, INTS4, INTS5, INTS6, INTS7, INTS8, INTS9/RC74, INTS10, INTS11/CPSF3L, INTS12, INTS13, INTS14 and INTS15. The core complex associates with protein phosphatase 2A subunits PPP2CA and PPP2R1A, to form the Integrator-PP2A (INTAC) complex.

It is found in the nucleus. It localises to the chromosome. In terms of biological role, component of the integrator complex, a multiprotein complex that terminates RNA polymerase II (Pol II) transcription in the promoter-proximal region of genes. The integrator complex provides a quality checkpoint during transcription elongation by driving premature transcription termination of transcripts that are unfavorably configured for transcriptional elongation: the complex terminates transcription by (1) catalyzing dephosphorylation of the C-terminal domain (CTD) of Pol II subunit POLR2A/RPB1 and SUPT5H/SPT5, (2) degrading the exiting nascent RNA transcript via endonuclease activity and (3) promoting the release of Pol II from bound DNA. The integrator complex is also involved in terminating the synthesis of non-coding Pol II transcripts, such as enhancer RNAs (eRNAs), small nuclear RNAs (snRNAs), telomerase RNAs and long non-coding RNAs (lncRNAs). Within the integrator complex, INTS8 is required for the recruitment of protein phosphatase 2A (PP2A) to transcription pause-release checkpoint. In Xenopus laevis (African clawed frog), this protein is Integrator complex subunit 8 (ints8).